A 189-amino-acid chain; its full sequence is Ras-like protein rasG (189 aa).

10-17 (GGGGVGKS) is a GTP binding site. The Effector region signature appears at 32–40 (YDPTIEDSY). GTP-binding positions include 57–61 (DTAGQ) and 116–119 (NKCD). The tract at residues 169–189 (KGDSKPEKGKKKRPLKACTLL) is disordered. Cysteine 186 carries the cysteine methyl ester modification. Residue cysteine 186 is the site of S-geranylgeranyl cysteine attachment. Positions 187 to 189 (TLL) are cleaved as a propeptide — removed in mature form.

This sequence belongs to the small GTPase superfamily. Ras family. In terms of assembly, interacts with ripA.

Its subcellular location is the cell membrane. The catalysed reaction is GTP + H2O = GDP + phosphate + H(+). Alternates between an inactive form bound to GDP and an active form bound to GTP. Activated by a guanine nucleotide-exchange factor (GEF) and inactivated by a GTPase-activating protein (GAP). Ras proteins bind GDP/GTP and possess intrinsic GTPase activity. In Dictyostelium discoideum (Social amoeba), this protein is Ras-like protein rasG (rasG).